Reading from the N-terminus, the 158-residue chain is MAKVESFTLDHTKVKAPYVRLITVEEGPKGDKISNYDLRLVQPNENAIPTAGLHTIEHLLAGLLRDRLGGVIDCSPFGCRTGFHLITWGEHSTTEVAKALKSSLEEIAYKTKWEDVQGTTIESCGNYRDHSLFSAKEWSKKILDEGISDKPFERHVVD.

His54, His58, and Cys124 together coordinate Fe cation.

It belongs to the LuxS family. In terms of assembly, homodimer. Fe cation is required as a cofactor.

The catalysed reaction is S-(5-deoxy-D-ribos-5-yl)-L-homocysteine = (S)-4,5-dihydroxypentane-2,3-dione + L-homocysteine. In terms of biological role, involved in the synthesis of autoinducer 2 (AI-2) which is secreted by bacteria and is used to communicate both the cell density and the metabolic potential of the environment. The regulation of gene expression in response to changes in cell density is called quorum sensing. Catalyzes the transformation of S-ribosylhomocysteine (RHC) to homocysteine (HC) and 4,5-dihydroxy-2,3-pentadione (DPD). This is S-ribosylhomocysteine lyase from Limosilactobacillus reuteri (strain DSM 20016) (Lactobacillus reuteri).